A 194-amino-acid chain; its full sequence is Peptidyl-tRNA hydrolase (194 aa).

A tRNA-binding site is contributed by Tyr17. Catalysis depends on His22, which acts as the Proton acceptor. The tRNA site is built by Tyr68, Asn70, and Asn116.

Belongs to the PTH family. Monomer.

Its subcellular location is the cytoplasm. The enzyme catalyses an N-acyl-L-alpha-aminoacyl-tRNA + H2O = an N-acyl-L-amino acid + a tRNA + H(+). Functionally, hydrolyzes ribosome-free peptidyl-tRNAs (with 1 or more amino acids incorporated), which drop off the ribosome during protein synthesis, or as a result of ribosome stalling. In terms of biological role, catalyzes the release of premature peptidyl moieties from peptidyl-tRNA molecules trapped in stalled 50S ribosomal subunits, and thus maintains levels of free tRNAs and 50S ribosomes. The chain is Peptidyl-tRNA hydrolase from Pseudoalteromonas translucida (strain TAC 125).